We begin with the raw amino-acid sequence, 319 residues long: Pantothenate kinase (319 aa).

101 to 108 (GSVAVGKS) contacts ATP.

It belongs to the prokaryotic pantothenate kinase family.

It is found in the cytoplasm. The enzyme catalyses (R)-pantothenate + ATP = (R)-4'-phosphopantothenate + ADP + H(+). It functions in the pathway cofactor biosynthesis; coenzyme A biosynthesis; CoA from (R)-pantothenate: step 1/5. The chain is Pantothenate kinase from Clavibacter sepedonicus (Clavibacter michiganensis subsp. sepedonicus).